A 412-amino-acid chain; its full sequence is MAGKAAAPGTAVLLVTANVGSLFDDPENLQKNWLREFYQVLHTHKPHFMALHCQEFGGKNYEASMSHVDKFVKELLSSDAMKEYNRARVYLDENYKSQEHFTALGSFYFLHESLKNIYQFDFKAKKYKKVTGKEIYSDTLESTPMLEKEKFPQDYFPECKWSRKGFIRTRWCIADCAFDLVNIHLFHDASNLVAWETSPSVYSGVRHKALGYVLDRIIDQRFEKVSYFVFGDFNFRLDSKSVVETLCTKATMQTVRAADTNEVVKLIFRESDNDRKVVLQLEKKLFDYFNQDVFRDNNGTALLEFDKELSVFKDRLYELDISFPPSYPYSEDSSQGEQYMNTRCPAWCDRILMSLSAKELVLKSESEEKVATYDHIGPNVCMGDHKPVFLAFRIAPGAGKPHAHVHKCCVVQ.

C409 is lipidated: S-farnesyl cysteine. Positions V410–Q412 are cleaved as a propeptide — removed in mature form.

This sequence belongs to the inositol 1,4,5-trisphosphate 5-phosphatase type I family. In terms of assembly, interacts with TASOR. Post-translationally, isoprenylation at Cys-409 is required for localization at the membrane. In terms of tissue distribution, expressed at high levels in cerebellar Purkinje cells (at protein level). Expressed in Sertoli cells of the testis.

The protein resides in the cell membrane. The protein localises to the cell projection. It localises to the dendrite. The enzyme catalyses 1D-myo-inositol 1,4,5-trisphosphate + H2O = 1D-myo-inositol 1,4-bisphosphate + phosphate. It catalyses the reaction 1D-myo-inositol 1,3,4,5-tetrakisphosphate + H2O = 1D-myo-inositol 1,3,4-trisphosphate + phosphate. Phosphatase that specifically hydrolyzes the 5-phosphate of inositol 1,4,5-trisphosphate to inositol 1,4-bisphosphate, and inositol 1,3,4,5-tetrasphosphate to inositol 1,3,4-trisphosphate. Plays a crucial role in the survival of cerebellar Purkinje cells. The chain is Inositol polyphosphate-5-phosphatase A (Inpp5a) from Mus musculus (Mouse).